Here is a 354-residue protein sequence, read N- to C-terminus: Putative Xaa-Pro aminopeptidase (354 aa).

Positions 213, 224, 290, 319, and 333 each coordinate Mn(2+).

This sequence belongs to the peptidase M24B family. It depends on Mn(2+) as a cofactor.

The enzyme catalyses Release of any N-terminal amino acid, including proline, that is linked to proline, even from a dipeptide or tripeptide.. This Mycoplasma genitalium (strain ATCC 33530 / DSM 19775 / NCTC 10195 / G37) (Mycoplasmoides genitalium) protein is Putative Xaa-Pro aminopeptidase (pepP).